Reading from the N-terminus, the 292-residue chain is mRNA export protein 33 (292 aa).

Positions 1 to 76 are disordered; it reads MPPKKAAKGK…RKRREEEKRA (76 aa). 2 stretches are compositionally biased toward basic and acidic residues: residues 9–26 and 58–76; these read GKGD…KKAA and KDAK…EKRA. The C3H1-type zinc-finger motif lies at 134-172; that stretch reads INTDIVCKFFLEACETGKYGWLWQCPNGNMTCIYKHALP.

It is found in the cytoplasm. Its function is as follows. Functions as a component of the nuclear pore complex (NPC). NPC components, collectively referred to as nucleoporins (NUPs), can play the role of both NPC structural components and of docking or interaction partners for transiently associated nuclear transport factors. Active directional transport is assured by both, a Phe-Gly (FG) repeat affinity gradient for these transport factors across the NPC and a transport cofactor concentration gradient across the nuclear envelope. Involved in the export of mRNA from the nucleus to the cytoplasm. May play a role in mitotic spindle formation and/or function. This is mRNA export protein 33 (mep33) from Schizosaccharomyces pombe (strain 972 / ATCC 24843) (Fission yeast).